We begin with the raw amino-acid sequence, 141 residues long: ATP synthase F(0) complex subunit C2, mitochondrial (141 aa).

A mitochondrion-targeting transit peptide spans 1–66; the sequence is MYACSKFVST…RSFQTSAISR (66 aa). Residues 82–102 traverse the membrane as a helical segment; sequence VGVAGSGAGIGTVFGSLIIGY. N6,N6,N6-trimethyllysine is present on Lys-109. Residues 117–137 traverse the membrane as a helical segment; the sequence is ILGFALSEAMGLFCLMVAFLI.

This sequence belongs to the ATPase C chain family. As to quaternary structure, F-type ATPases have 2 components, CF(1) - the catalytic core - and CF(0) - the membrane proton channel. CF(1) has five subunits: alpha(3), beta(3), gamma(1), delta(1), epsilon(1). CF(0) has three main subunits: a, b and c. Interacts with DNAJC30; interaction is direct. Trimethylated by ATPSCKMT at Lys-109. Methylation is required for proper incorporation of the C subunit into the ATP synthase complex and mitochondrial respiration.

The protein localises to the mitochondrion membrane. In terms of biological role, mitochondrial membrane ATP synthase (F(1)F(0) ATP synthase or Complex V) produces ATP from ADP in the presence of a proton gradient across the membrane which is generated by electron transport complexes of the respiratory chain. F-type ATPases consist of two structural domains, F(1) - containing the extramembraneous catalytic core and F(0) - containing the membrane proton channel, linked together by a central stalk and a peripheral stalk. During catalysis, ATP synthesis in the catalytic domain of F(1) is coupled via a rotary mechanism of the central stalk subunits to proton translocation. Part of the complex F(0) domain. A homomeric c-ring of probably 10 subunits is part of the complex rotary element. This chain is ATP synthase F(0) complex subunit C2, mitochondrial, found in Rattus norvegicus (Rat).